The sequence spans 301 residues: tRNA dimethylallyltransferase (301 aa).

12-19 (GPTAVGKT) contacts ATP. Position 14-19 (14-19 (TAVGKT)) interacts with substrate. The interval 37–40 (DSQQ) is interaction with substrate tRNA.

It belongs to the IPP transferase family. In terms of assembly, monomer. The cofactor is Mg(2+).

It catalyses the reaction adenosine(37) in tRNA + dimethylallyl diphosphate = N(6)-dimethylallyladenosine(37) in tRNA + diphosphate. Functionally, catalyzes the transfer of a dimethylallyl group onto the adenine at position 37 in tRNAs that read codons beginning with uridine, leading to the formation of N6-(dimethylallyl)adenosine (i(6)A). This Streptococcus uberis (strain ATCC BAA-854 / 0140J) protein is tRNA dimethylallyltransferase.